A 298-amino-acid polypeptide reads, in one-letter code: Ribosomal protein L11 methyltransferase (298 aa).

The S-adenosyl-L-methionine site is built by threonine 152, glycine 176, aspartate 198, and asparagine 236.

Belongs to the methyltransferase superfamily. PrmA family.

It localises to the cytoplasm. The catalysed reaction is L-lysyl-[protein] + 3 S-adenosyl-L-methionine = N(6),N(6),N(6)-trimethyl-L-lysyl-[protein] + 3 S-adenosyl-L-homocysteine + 3 H(+). Functionally, methylates ribosomal protein L11. This chain is Ribosomal protein L11 methyltransferase, found in Polaromonas sp. (strain JS666 / ATCC BAA-500).